Consider the following 523-residue polypeptide: Cytoplasmic dynein 1 light intermediate chain 1 (523 aa).

Residues 1 to 45 are disordered; it reads MAAVGRVGSFGSSPPGLASTYASGPLANELASGSGGPAAGDDEDG. 74-81 lines the ATP pocket; sequence GEDGAGKT. S207 is modified (phosphoserine). T213 is subject to Phosphothreonine. 2 disordered regions span residues 387 to 434 and 457 to 523; these read PPTA…DPNM and GSPG…GEAS. 2 positions are modified to phosphoserine: S398 and S405. T408 bears the Phosphothreonine mark. Phosphoserine occurs at positions 412, 419, 421, and 427. Over residues 412–421 the composition is skewed to low complexity; it reads SVSSNVASVS. Residues 458–473 are compositionally biased toward gly residues; it reads SPGGPGVGGSPGGGAA. The span at 474 to 483 shows a compositional bias: low complexity; sequence GASTSLPPSA. Residues S486 and S510 each carry the phosphoserine modification. Phosphothreonine occurs at positions 512 and 513. At S516 the chain carries Phosphoserine.

The protein belongs to the dynein light intermediate chain family. As to quaternary structure, homodimer. The cytoplasmic dynein 1 complex consists of two catalytic heavy chains (HCs) and a number of non-catalytic subunits presented by intermediate chains (ICs), light intermediate chains (LICs) and light chains (LCs); the composition seems to vary in respect to the IC, LIC and LC composition. The heavy chain homodimer serves as a scaffold for the probable homodimeric assembly of the respective non-catalytic subunits. The ICs and LICs bind directly to the HC dimer and the LCs assemble on the IC dimer. Self-associates. Interacts with DYNC1H1; DYNC1LI1 and DYNC1LI2 bind mutually exclusive to DYNC1H1. Interacts with PCNT. Forms a complex with RAB11FIP3 and RAB11A1; the interaction between DYNC1LI1 and RAB11FIP3 is direct and induces DYNC1LI1 localization onto endosomal membrane; the complex regulates endocytic trafficking. Interacts with RUFY3. Post-translationally, phosphorylated during mitosis but not in interphase.

It localises to the cytoplasm. Its subcellular location is the chromosome. It is found in the centromere. The protein localises to the kinetochore. The protein resides in the cytoskeleton. It localises to the spindle pole. Its subcellular location is the recycling endosome membrane. Functionally, acts as one of several non-catalytic accessory components of the cytoplasmic dynein 1 complex that are thought to be involved in linking dynein to cargos and to adapter proteins that regulate dynein function. Cytoplasmic dynein 1 acts as a motor for the intracellular retrograde motility of vesicles and organelles along microtubules. May play a role in binding dynein to membranous organelles or chromosomes. Probably involved in the microtubule-dependent transport of pericentrin. Is required for progress through the spindle assembly checkpoint. The phosphorylated form appears to be involved in the selective removal of MAD1L1 and MAD1L2 but not BUB1B from kinetochores. Forms a functional Rab11/RAB11FIP3/dynein complex onto endosomal membrane that regulates the movement of peripheral sorting endosomes (SE) along microtubule tracks toward the microtubule organizing center/centrosome, generating the endosomal recycling compartment (ERC). The chain is Cytoplasmic dynein 1 light intermediate chain 1 (Dync1li1) from Rattus norvegicus (Rat).